Consider the following 355-residue polypeptide: Uroporphyrinogen decarboxylase (355 aa).

Substrate is bound by residues 27–31, Asp-78, Tyr-155, Ser-210, and His-328; that span reads RQAGR.

The protein belongs to the uroporphyrinogen decarboxylase family. In terms of assembly, homodimer.

It is found in the cytoplasm. The catalysed reaction is uroporphyrinogen III + 4 H(+) = coproporphyrinogen III + 4 CO2. The protein operates within porphyrin-containing compound metabolism; protoporphyrin-IX biosynthesis; coproporphyrinogen-III from 5-aminolevulinate: step 4/4. Its function is as follows. Catalyzes the decarboxylation of four acetate groups of uroporphyrinogen-III to yield coproporphyrinogen-III. The chain is Uroporphyrinogen decarboxylase from Pseudomonas paraeruginosa (strain DSM 24068 / PA7) (Pseudomonas aeruginosa (strain PA7)).